A 292-amino-acid polypeptide reads, in one-letter code: Elongation factor Ts (292 aa).

Positions 82–85 (TDFV) are involved in Mg(2+) ion dislocation from EF-Tu.

Belongs to the EF-Ts family.

Its subcellular location is the cytoplasm. Associates with the EF-Tu.GDP complex and induces the exchange of GDP to GTP. It remains bound to the aminoacyl-tRNA.EF-Tu.GTP complex up to the GTP hydrolysis stage on the ribosome. In Legionella pneumophila subsp. pneumophila (strain Philadelphia 1 / ATCC 33152 / DSM 7513), this protein is Elongation factor Ts.